We begin with the raw amino-acid sequence, 376 residues long: N-acetyldiaminopimelate deacetylase (376 aa).

Residue Asp-69 is part of the active site. The active-site Proton acceptor is the Glu-128.

Belongs to the peptidase M20A family. N-acetyldiaminopimelate deacetylase subfamily.

The enzyme catalyses N-acetyl-(2S,6S)-2,6-diaminopimelate + H2O = (2S,6S)-2,6-diaminopimelate + acetate. Its pathway is amino-acid biosynthesis; L-lysine biosynthesis via DAP pathway; LL-2,6-diaminopimelate from (S)-tetrahydrodipicolinate (acetylase route): step 3/3. In terms of biological role, catalyzes the conversion of N-acetyl-diaminopimelate to diaminopimelate and acetate. In Streptococcus pneumoniae (strain JJA), this protein is N-acetyldiaminopimelate deacetylase.